The following is an 86-amino-acid chain: Tryptophan-containing weak neurotoxin (86 aa).

The first 21 residues, 1–21, serve as a signal peptide directing secretion; it reads MKTLLLTLVVVTIVCLDLGYT. 5 disulfide bridges follow: C24/C45, C27/C32, C38/C63, C67/C78, and C79/C84.

This sequence belongs to the three-finger toxin family. Ancestral subfamily. Orphan group II sub-subfamily. As to quaternary structure, monomer in solution. In terms of processing, the disulfide bond Cys-27-Cys-32 is probably not needed for efficient interaction of the toxin with the target receptor (Torpedo muscle or alpha-7/CHRNA7 nAChR). In terms of tissue distribution, expressed by the venom gland.

It localises to the secreted. In terms of biological role, neurotoxin that irreversibly inhibits nicotinic acetylcholine receptors (nAChR) and allosterically interacts with muscarinic acetylcholine receptors (mAChR). The loop II is involved in the interaction of this toxin with nAChR and mAChR. On nAChR, it acts as a competitive antagonist (muscle-type and alpha-7/CHRNA7) with IC(50) values in the micromolar range. On mAChR, in presence of ACh, it partially inhibits the effect of acetylcholine (ACh) (allosteric antagonist), whereas in the absence of ACh, it activates the receptor (allosteric agonist). It also shows a very weak inhibition of GABA(A) receptor composed of alpha-1-beta-3-gamma-2 (GABRA1 and GABRB3 and GABRG2) subunits (10 uM inhibit 31% current). In vivo, is nonlethal to mice at concentrations up to 20 mg/kg, but exerts a myorelaxant effect, induces a dose-dependent decrease in blood pressure and an increase in heart rate in mice and rats. This chain is Tryptophan-containing weak neurotoxin, found in Naja kaouthia (Monocled cobra).